Here is a 155-residue protein sequence, read N- to C-terminus: Fibroblast growth factor 1 (155 aa).

Residues 1 to 15 (MAEGDITTFNAITES) constitute a propeptide that is removed on maturation. Asn33 provides a ligand contact to heparin. The interval 127–143 (KKNGASKKGSRTHYGQK) is heparin-binding.

This sequence belongs to the heparin-binding growth factors family.

Its subcellular location is the secreted. The protein localises to the cytoplasm. It localises to the cell cortex. The protein resides in the cytosol. It is found in the nucleus. Plays an important role in the regulation of cell survival, cell division, angiogenesis, cell differentiation and cell migration. Functions as a potent mitogen in vitro. Acts as a ligand for FGFR1 and integrins. Binds to FGFR1 in the presence of heparin leading to FGFR1 dimerization and activation via sequential autophosphorylation on tyrosine residues which act as docking sites for interacting proteins, leading to the activation of several signaling cascades. Binds to integrins. Its binding to integrins and subsequent ternary complex formation with integrins and FGFR1 are essential for FGF1 signaling. This chain is Fibroblast growth factor 1 (fgf1), found in Xenopus laevis (African clawed frog).